We begin with the raw amino-acid sequence, 238 residues long: Endothelial protein C receptor (238 aa).

The signal sequence occupies residues 1-17; the sequence is MLTTLLPILLLSGWAFC. The Extracellular segment spans residues 18–210; it reads SQDASDGLQR…GSQTSRSYTS (193 aa). N-linked (GlcNAc...) asparagine glycosylation is found at Asn47, Asn64, Asn136, and Asn172. Cys118 and Cys186 are disulfide-bonded. The helical transmembrane segment at 211–231 threads the bilayer; that stretch reads LVLGVLVGSFIIAGVAVGIFL. The Cytoplasmic portion of the chain corresponds to 232–238; sequence CTGGRRC.

N-glycosylated. Post-translationally, a soluble form exists; probably released by a metalloprotease. Seems to have the same activity as the membrane-bound form. As to expression, expressed strongly in the endothelial cells of arteries and veins in heart and lung, less intensely in capillaries in the lung and skin, and not at all in the endothelium of small vessels of the liver and kidney.

Its subcellular location is the membrane. In terms of biological role, binds activated protein C. Enhances protein C activation by the thrombin-thrombomodulin complex; plays a role in the protein C pathway controlling blood coagulation. This is Endothelial protein C receptor (PROCR) from Homo sapiens (Human).